The sequence spans 77 residues: Acyl carrier protein (77 aa).

Residues 1–76 form the Carrier domain; it reads MAVFDDVRDV…DVVNYIEKLG (76 aa). Ser-36 carries the post-translational modification O-(pantetheine 4'-phosphoryl)serine.

Belongs to the acyl carrier protein (ACP) family. In terms of processing, 4'-phosphopantetheine is transferred from CoA to a specific serine of apo-ACP by AcpS. This modification is essential for activity because fatty acids are bound in thioester linkage to the sulfhydryl of the prosthetic group.

The protein localises to the cytoplasm. The protein operates within lipid metabolism; fatty acid biosynthesis. Functionally, carrier of the growing fatty acid chain in fatty acid biosynthesis. In Campylobacter curvus (strain 525.92), this protein is Acyl carrier protein.